The chain runs to 257 residues: Cytosolic Fe-S cluster assembly factor NUBP2 homolog (257 aa).

Position 14–21 (14–21) interacts with ATP; that stretch reads GKGGVGKS. [4Fe-4S] cluster contacts are provided by Cys-188 and Cys-191.

The protein belongs to the Mrp/NBP35 ATP-binding proteins family. NUBP2/CFD1 subfamily. As to quaternary structure, heterotetramer of 2 NUBP1 and 2 NUBP2 chains. [4Fe-4S] cluster serves as cofactor.

The protein localises to the cytoplasm. Functionally, component of the cytosolic iron-sulfur (Fe/S) protein assembly (CIA) machinery. Required for maturation of extramitochondrial Fe-S proteins. The NUBP1-NUBP2 heterotetramer forms a Fe-S scaffold complex, mediating the de novo assembly of an Fe-S cluster and its transfer to target apoproteins. In Culex quinquefasciatus (Southern house mosquito), this protein is Cytosolic Fe-S cluster assembly factor NUBP2 homolog.